Reading from the N-terminus, the 255-residue chain is Urease accessory protein UreD 1 (255 aa).

Belongs to the UreD family. In terms of assembly, ureD, UreF and UreG form a complex that acts as a GTP-hydrolysis-dependent molecular chaperone, activating the urease apoprotein by helping to assemble the nickel containing metallocenter of UreC. The UreE protein probably delivers the nickel.

It is found in the cytoplasm. In terms of biological role, required for maturation of urease via the functional incorporation of the urease nickel metallocenter. This chain is Urease accessory protein UreD 1, found in Streptomyces griseus subsp. griseus (strain JCM 4626 / CBS 651.72 / NBRC 13350 / KCC S-0626 / ISP 5235).